The primary structure comprises 529 residues: Retinoic acid-induced protein 2 (529 aa).

2 disordered regions span residues 1–21 and 400–419; these read MDDL…PTLA and SHSS…HPGS. The segment covering 407–416 has biased composition (polar residues); the sequence is GTEMVSQPSH.

The polypeptide is Retinoic acid-induced protein 2 (Rai2) (Mus musculus (Mouse)).